Here is a 301-residue protein sequence, read N- to C-terminus: Transcription elongation factor A protein 1 (301 aa).

M1 bears the N-acetylmethionine mark. The TFIIS N-terminal domain maps to 3-80; it reads DEVVRIAKKM…KSWKKLLDGP (78 aa). K55 is covalently cross-linked (Glycyl lysine isopeptide (Lys-Gly) (interchain with G-Cter in ubiquitin)). Phosphoserine is present on residues S57, S81, S97, and S100. Residues 76-93 show a composition bias toward basic and acidic residues; that stretch reads LLDGPSTDKDPEEKKKEP. The disordered stretch occupies residues 76-139; it reads LLDGPSTDKD…FPRAPSTSDS (64 aa). One can recognise a TFIIS central domain in the interval 140 to 256; that stretch reads VRLKCREMLA…EHQMAKTGGT (117 aa). The TFIIS-type zinc-finger motif lies at 259-299; sequence DLFTCGKCKKKNCTYTQVQTRSADEPMTTFVVCNECGNRWK. Zn(2+)-binding residues include C263, C266, C291, and C294.

Belongs to the TFS-II family. Interacts with EAF2. Associates with UBR5 and forms a transcription regulatory complex made of CDK9, Pol II, UBR5 and TCEA1/TFIIS. Part of TBP-based Pol II pre-initiation complex (PIC), in which Pol II core assembles with general transcription factors and other specific initiation factors including GTF2E1, GTF2E2, GTF2F1, GTF2F2, TCEA1, ERCC2, ERCC3, GTF2H2, GTF2H3, GTF2H4, GTF2H5, GTF2A1, GTF2A2, GTF2B and TBP; this large multi-subunit PIC complex mediates DNA unwinding and targets Pol II core to the transcription start site where the first phosphodiester bond forms.

It is found in the nucleus. Necessary for efficient RNA polymerase II transcription elongation past template-encoded arresting sites. The arresting sites in DNA have the property of trapping a certain fraction of elongating RNA polymerases that pass through, resulting in locked ternary complexes. Cleavage of the nascent transcript by S-II allows the resumption of elongation from the new 3'-terminus. The protein is Transcription elongation factor A protein 1 (Tcea1) of Mus musculus (Mouse).